Consider the following 495-residue polypeptide: Probable cytosol aminopeptidase (495 aa).

The Mn(2+) site is built by lysine 266 and aspartate 271. Residue lysine 278 is part of the active site. The Mn(2+) site is built by aspartate 289, aspartate 348, and glutamate 350. Arginine 352 is an active-site residue.

This sequence belongs to the peptidase M17 family. It depends on Mn(2+) as a cofactor.

It is found in the cytoplasm. It catalyses the reaction Release of an N-terminal amino acid, Xaa-|-Yaa-, in which Xaa is preferably Leu, but may be other amino acids including Pro although not Arg or Lys, and Yaa may be Pro. Amino acid amides and methyl esters are also readily hydrolyzed, but rates on arylamides are exceedingly low.. The catalysed reaction is Release of an N-terminal amino acid, preferentially leucine, but not glutamic or aspartic acids.. Its function is as follows. Presumably involved in the processing and regular turnover of intracellular proteins. Catalyzes the removal of unsubstituted N-terminal amino acids from various peptides. The protein is Probable cytosol aminopeptidase of Pseudomonas paraeruginosa (strain DSM 24068 / PA7) (Pseudomonas aeruginosa (strain PA7)).